Here is an 827-residue protein sequence, read N- to C-terminus: Lon protease (827 aa).

The 196-residue stretch at 38–233 folds into the Lon N-terminal domain; it reads LTLLASKYNV…VLLKYLLKDL (196 aa). Residue 384-391 coordinates ATP; sequence GPPGVGKT. Residues 619–800 enclose the Lon proteolytic domain; that stretch reads THLPGVAIGL…EEVIQLALQP (182 aa). Active-site residues include Ser-706 and Lys-749.

Belongs to the peptidase S16 family. Homohexamer. Organized in a ring with a central cavity.

Its subcellular location is the cytoplasm. It catalyses the reaction Hydrolysis of proteins in presence of ATP.. ATP-dependent serine protease that mediates the selective degradation of mutant and abnormal proteins as well as certain short-lived regulatory proteins. Required for cellular homeostasis and for survival from DNA damage and developmental changes induced by stress. Degrades polypeptides processively to yield small peptide fragments that are 5 to 10 amino acids long. Binds to DNA in a double-stranded, site-specific manner. The protein is Lon protease of Amoebophilus asiaticus (strain 5a2).